We begin with the raw amino-acid sequence, 487 residues long: Aspartyl/glutamyl-tRNA(Asn/Gln) amidotransferase subunit B (487 aa).

Belongs to the GatB/GatE family. GatB subfamily. Heterotrimer of A, B and C subunits.

The enzyme catalyses L-glutamyl-tRNA(Gln) + L-glutamine + ATP + H2O = L-glutaminyl-tRNA(Gln) + L-glutamate + ADP + phosphate + H(+). It catalyses the reaction L-aspartyl-tRNA(Asn) + L-glutamine + ATP + H2O = L-asparaginyl-tRNA(Asn) + L-glutamate + ADP + phosphate + 2 H(+). Allows the formation of correctly charged Asn-tRNA(Asn) or Gln-tRNA(Gln) through the transamidation of misacylated Asp-tRNA(Asn) or Glu-tRNA(Gln) in organisms which lack either or both of asparaginyl-tRNA or glutaminyl-tRNA synthetases. The reaction takes place in the presence of glutamine and ATP through an activated phospho-Asp-tRNA(Asn) or phospho-Glu-tRNA(Gln). The chain is Aspartyl/glutamyl-tRNA(Asn/Gln) amidotransferase subunit B from Chlamydia caviae (strain ATCC VR-813 / DSM 19441 / 03DC25 / GPIC) (Chlamydophila caviae).